We begin with the raw amino-acid sequence, 381 residues long: MESIGIVAPQTMHFAEPLRLQSGSVIGNYQLVVETYGELNAARSNAVLVCHALNASHHVAGVYADDPRSTGWWDNMVGPGKPLDTNRFFVIGVNNLGSCFGSTGPMSADPSTGKPYGASFPVVTVEDWVHAQARVADAFGIERFAAVMGGSLGGMQALAWSLMYPERVAHCIDIASTPKLSAQNIAFNEVARSAILSDPDFHGGDYYAHGVKPKRGLRVARMIGHITYLSDDDMAEKFGRALRRADGALDAYNFSFDVEFEVESYLRYQGDKFADYFDANTYLLITRALDYFDPAKAFDGNLTAALAHTQAKYLIASFSTDWRFAPARSREIVKALLDNKRTVSYAEIDAPHGHDAFLLDDARYHNLIRAYYERIANEVGA.

In terms of domain architecture, AB hydrolase-1 spans 45 to 360 (NAVLVCHALN…PHGHDAFLLD (316 aa)). The active-site Nucleophile is the Ser151. Arg221 lines the substrate pocket. Residues Asp321 and His354 contribute to the active site. Asp355 serves as a coordination point for substrate.

This sequence belongs to the AB hydrolase superfamily. MetX family. As to quaternary structure, homodimer.

Its subcellular location is the cytoplasm. It carries out the reaction L-homoserine + succinyl-CoA = O-succinyl-L-homoserine + CoA. Its pathway is amino-acid biosynthesis; L-methionine biosynthesis via de novo pathway; O-succinyl-L-homoserine from L-homoserine: step 1/1. Its function is as follows. Transfers a succinyl group from succinyl-CoA to L-homoserine, forming succinyl-L-homoserine. This Burkholderia lata (strain ATCC 17760 / DSM 23089 / LMG 22485 / NCIMB 9086 / R18194 / 383) protein is Homoserine O-succinyltransferase.